A 172-amino-acid chain; its full sequence is Translation initiation factor IF-3 (172 aa).

It belongs to the IF-3 family. In terms of assembly, monomer.

It localises to the cytoplasm. In terms of biological role, IF-3 binds to the 30S ribosomal subunit and shifts the equilibrium between 70S ribosomes and their 50S and 30S subunits in favor of the free subunits, thus enhancing the availability of 30S subunits on which protein synthesis initiation begins. This is Translation initiation factor IF-3 from Geobacillus stearothermophilus (Bacillus stearothermophilus).